The sequence spans 148 residues: Large ribosomal subunit protein bL19 (148 aa).

Belongs to the bacterial ribosomal protein bL19 family.

Functionally, this protein is located at the 30S-50S ribosomal subunit interface and may play a role in the structure and function of the aminoacyl-tRNA binding site. The protein is Large ribosomal subunit protein bL19 of Paramagnetospirillum magneticum (strain ATCC 700264 / AMB-1) (Magnetospirillum magneticum).